The sequence spans 637 residues: Probable ATP-binding protein YheS (637 aa).

ABC transporter domains follow at residues I2–Q246 and L313–N527. ATP contacts are provided by residues G34–S41 and G345–S352. The tract at residues Q523–P559 is disordered. The segment covering A542–L553 has biased composition (basic and acidic residues).

The protein belongs to the ABC transporter superfamily. ABCF family. YheS subfamily.

Functionally, genetic data indicate it may be involved in ribosome assembly or function. The polypeptide is Probable ATP-binding protein YheS (yheS) (Escherichia coli O157:H7).